A 196-amino-acid polypeptide reads, in one-letter code: Thymidine kinase (196 aa).

ATP contacts are provided by residues 9–16 and 88–91; these read SAMNAGKS and DEAQ. The active-site Proton acceptor is glutamate 89. 4 residues coordinate Zn(2+): cysteine 146, cysteine 148, cysteine 183, and histidine 186.

This sequence belongs to the thymidine kinase family. As to quaternary structure, homotetramer.

Its subcellular location is the cytoplasm. The enzyme catalyses thymidine + ATP = dTMP + ADP + H(+). In Coxiella burnetii (strain RSA 493 / Nine Mile phase I), this protein is Thymidine kinase.